The following is a 105-amino-acid chain: Small ribosomal subunit protein uS10 (105 aa).

It belongs to the universal ribosomal protein uS10 family. As to quaternary structure, part of the 30S ribosomal subunit.

Its function is as follows. Involved in the binding of tRNA to the ribosomes. This Chlamydia abortus (strain DSM 27085 / S26/3) (Chlamydophila abortus) protein is Small ribosomal subunit protein uS10.